The primary structure comprises 657 residues: Knob-associated histidine-rich protein (657 aa).

The signal sequence occupies residues 1 to 34 (MKSFKNKNTLRRKKAFPVFTKILLVSFLVWVLKC). Residue asparagine 42 is glycosylated (N-linked (GlcNAc...) asparagine). A compositionally biased stretch (basic residues) spans 57 to 76 (AQKQHEHHHHHHHHHHHQHQ). 3 disordered regions span residues 57 to 138 (AQKQ…PSNE), 282 to 301 (AHDG…SEGY), and 352 to 657 (VNKY…GCCG). The segment covering 99–108 (PQVHQQVHGQ) has biased composition (low complexity). The segment covering 112–123 (HHHHHHHHHHLH) has biased composition (basic residues). Composition is skewed to basic and acidic residues over residues 357–378 (KHGD…EGEK) and 399–408 (KDNEDAESVK). Residues 409 to 425 (SKKHKSHDCEKKKSKKH) are compositionally biased toward basic residues. Positions 426 to 435 (KDNEDAESVK) are enriched in basic and acidic residues. Residues 453 to 468 (AAKKLTKKIKIKKKTN) show a composition bias toward basic residues. A compositionally biased stretch (basic and acidic residues) spans 473-496 (DGSKAHEKKENETKNTAGENKKVD). The span at 497–508 (STSADNKSTNAA) shows a compositional bias: polar residues. Basic and acidic residues-rich tracts occupy residues 512–523 (AKDKTQGGKTDK) and 551–578 (STSK…EATK). Low complexity predominate over residues 590–614 (ASTTEGATKGASTTAGSTTGATTGA). The span at 628-643 (AANNGEQVMSRGQAQL) shows a compositional bias: polar residues. Residues 648–657 (KKKKKRGCCG) are compositionally biased toward basic residues.

The protein localises to the secreted. In terms of biological role, KAHRP might mimick human histidine-rich glycoproteins to anchor host thrombospondin or a parasite analog in a binding complex with the endothelial cell receptor. This is Knob-associated histidine-rich protein (SD17) from Plasmodium falciparum (isolate NF7 / Ghana).